Reading from the N-terminus, the 86-residue chain is Exodeoxyribonuclease 7 small subunit (86 aa).

Residues 1–26 form a disordered region; sequence MQDELFETEKAPQKNAKNAKNAPKKS.

Belongs to the XseB family. As to quaternary structure, heterooligomer composed of large and small subunits.

It is found in the cytoplasm. It carries out the reaction Exonucleolytic cleavage in either 5'- to 3'- or 3'- to 5'-direction to yield nucleoside 5'-phosphates.. Its function is as follows. Bidirectionally degrades single-stranded DNA into large acid-insoluble oligonucleotides, which are then degraded further into small acid-soluble oligonucleotides. The sequence is that of Exodeoxyribonuclease 7 small subunit from Helicobacter pylori (strain J99 / ATCC 700824) (Campylobacter pylori J99).